Reading from the N-terminus, the 99-residue chain is Putative pterin-4-alpha-carbinolamine dehydratase (99 aa).

The protein belongs to the pterin-4-alpha-carbinolamine dehydratase family.

It carries out the reaction (4aS,6R)-4a-hydroxy-L-erythro-5,6,7,8-tetrahydrobiopterin = (6R)-L-erythro-6,7-dihydrobiopterin + H2O. The polypeptide is Putative pterin-4-alpha-carbinolamine dehydratase (Synechococcus sp. (strain CC9311)).